Here is a 58-residue protein sequence, read N- to C-terminus: uncharacterized protein (58 aa).

2 consecutive transmembrane segments (helical) span residues 7–27 (IFDI…VAKT) and 29–49 (YGTG…AYKI).

It localises to the cell membrane. This is an uncharacterized protein from Bacillus subtilis (strain 168).